Here is a 398-residue protein sequence, read N- to C-terminus: Argininosuccinate synthase (398 aa).

ATP contacts are provided by residues 9 to 17 (AYSGGVDTS) and Ala-37. Tyr-88 is an L-citrulline binding site. Gly-118 serves as a coordination point for ATP. L-aspartate-binding residues include Thr-120, Asn-124, and Asp-125. Asn-124 is a binding site for L-citrulline. Residues Arg-128, Ser-176, Ser-185, Glu-261, and Tyr-273 each coordinate L-citrulline.

Belongs to the argininosuccinate synthase family. Type 1 subfamily. Homotetramer.

Its subcellular location is the cytoplasm. The enzyme catalyses L-citrulline + L-aspartate + ATP = 2-(N(omega)-L-arginino)succinate + AMP + diphosphate + H(+). It functions in the pathway amino-acid biosynthesis; L-arginine biosynthesis; L-arginine from L-ornithine and carbamoyl phosphate: step 2/3. This chain is Argininosuccinate synthase, found in Gloeobacter violaceus (strain ATCC 29082 / PCC 7421).